A 394-amino-acid polypeptide reads, in one-letter code: Argininosuccinate synthase (394 aa).

8–16 contributes to the ATP binding site; sequence AYSGGLDTS. Positions 86 and 91 each coordinate L-citrulline. Residue Gly116 coordinates ATP. Residues Thr118, Asn122, and Asp123 each coordinate L-aspartate. Asn122 serves as a coordination point for L-citrulline. L-citrulline is bound by residues Arg126, Ser172, Ser181, Glu256, and Tyr268.

Belongs to the argininosuccinate synthase family. Type 1 subfamily. As to quaternary structure, homotetramer.

Its subcellular location is the cytoplasm. It carries out the reaction L-citrulline + L-aspartate + ATP = 2-(N(omega)-L-arginino)succinate + AMP + diphosphate + H(+). It functions in the pathway amino-acid biosynthesis; L-arginine biosynthesis; L-arginine from L-ornithine and carbamoyl phosphate: step 2/3. The polypeptide is Argininosuccinate synthase (Methanococcoides burtonii (strain DSM 6242 / NBRC 107633 / OCM 468 / ACE-M)).